We begin with the raw amino-acid sequence, 453 residues long: Na(+)/H(+) antiporter NhaA (453 aa).

Helical transmembrane passes span 27–47, 78–98, 114–134, 143–163, 172–192, 201–221, 222–242, 249–269, 316–336, 346–366, 385–405, and 421–441; these read FLHIEALSGVVLLLAAAAALM, LHFWVNDALMAVFFLVAGMEI, ILPIVAAIGGVCLPAIIYFSF, GWAVPTATDIAFALGILALLG, IILLSLAIIDDIIAVLIIAFF, GLVIAIAGIALVLFFQWIGFA, SAWLYILPGAIIWWGLMVTGI, VILGMMTPVLPTRTLIAPLTI, PWVAYGVMPIFAFANAGVSFA, FLIVLGVVIGLFIGKPLGIIT, WAGILLIGFLAGIGFTMSIFV, and IGVLCGSGLSALIGLGYGLIY.

This sequence belongs to the NhaA Na(+)/H(+) (TC 2.A.33) antiporter family.

The protein resides in the cell inner membrane. It carries out the reaction Na(+)(in) + 2 H(+)(out) = Na(+)(out) + 2 H(+)(in). Its function is as follows. Na(+)/H(+) antiporter that extrudes sodium in exchange for external protons. In Bartonella henselae (strain ATCC 49882 / DSM 28221 / CCUG 30454 / Houston 1) (Rochalimaea henselae), this protein is Na(+)/H(+) antiporter NhaA.